The primary structure comprises 460 residues: Bifunctional protein GlmU (460 aa).

Positions 1-232 are pyrophosphorylase; sequence MALNVVILAA…AIEVEGANNR (232 aa). UDP-N-acetyl-alpha-D-glucosamine-binding positions include 8–11, Lys22, Gln73, 78–79, 100–102, Gly137, Glu157, Asn172, and Asn230; these read LAAG, GT, and YGD. Asp102 is a Mg(2+) binding site. Position 230 (Asn230) interacts with Mg(2+). The linker stretch occupies residues 233-253; that stretch reads VQLAQLERAYQAREAEKLMLA. An N-acetyltransferase region spans residues 254-460; it reads GANLRDPSRI…GWQRPVKIKK (207 aa). Residues Arg336 and Lys354 each coordinate UDP-N-acetyl-alpha-D-glucosamine. His366 serves as the catalytic Proton acceptor. 2 residues coordinate UDP-N-acetyl-alpha-D-glucosamine: Tyr369 and Asn380. Acetyl-CoA contacts are provided by residues Ala383, 389 to 390, Ser408, Ala426, and Arg443; that span reads NY.

This sequence in the N-terminal section; belongs to the N-acetylglucosamine-1-phosphate uridyltransferase family. In the C-terminal section; belongs to the transferase hexapeptide repeat family. Homotrimer. Mg(2+) is required as a cofactor.

The protein resides in the cytoplasm. It catalyses the reaction alpha-D-glucosamine 1-phosphate + acetyl-CoA = N-acetyl-alpha-D-glucosamine 1-phosphate + CoA + H(+). It carries out the reaction N-acetyl-alpha-D-glucosamine 1-phosphate + UTP + H(+) = UDP-N-acetyl-alpha-D-glucosamine + diphosphate. It participates in nucleotide-sugar biosynthesis; UDP-N-acetyl-alpha-D-glucosamine biosynthesis; N-acetyl-alpha-D-glucosamine 1-phosphate from alpha-D-glucosamine 6-phosphate (route II): step 2/2. Its pathway is nucleotide-sugar biosynthesis; UDP-N-acetyl-alpha-D-glucosamine biosynthesis; UDP-N-acetyl-alpha-D-glucosamine from N-acetyl-alpha-D-glucosamine 1-phosphate: step 1/1. The protein operates within bacterial outer membrane biogenesis; LPS lipid A biosynthesis. In terms of biological role, catalyzes the last two sequential reactions in the de novo biosynthetic pathway for UDP-N-acetylglucosamine (UDP-GlcNAc). The C-terminal domain catalyzes the transfer of acetyl group from acetyl coenzyme A to glucosamine-1-phosphate (GlcN-1-P) to produce N-acetylglucosamine-1-phosphate (GlcNAc-1-P), which is converted into UDP-GlcNAc by the transfer of uridine 5-monophosphate (from uridine 5-triphosphate), a reaction catalyzed by the N-terminal domain. In Shewanella baltica (strain OS155 / ATCC BAA-1091), this protein is Bifunctional protein GlmU.